The sequence spans 282 residues: ATP phosphoribosyltransferase (282 aa).

The protein belongs to the ATP phosphoribosyltransferase family. Long subfamily. Mg(2+) is required as a cofactor.

The protein resides in the cytoplasm. The catalysed reaction is 1-(5-phospho-beta-D-ribosyl)-ATP + diphosphate = 5-phospho-alpha-D-ribose 1-diphosphate + ATP. The protein operates within amino-acid biosynthesis; L-histidine biosynthesis; L-histidine from 5-phospho-alpha-D-ribose 1-diphosphate: step 1/9. With respect to regulation, feedback inhibited by histidine. Catalyzes the condensation of ATP and 5-phosphoribose 1-diphosphate to form N'-(5'-phosphoribosyl)-ATP (PR-ATP). Has a crucial role in the pathway because the rate of histidine biosynthesis seems to be controlled primarily by regulation of HisG enzymatic activity. This chain is ATP phosphoribosyltransferase, found in Pyrobaculum aerophilum (strain ATCC 51768 / DSM 7523 / JCM 9630 / CIP 104966 / NBRC 100827 / IM2).